A 399-amino-acid chain; its full sequence is Probable 3-ketosteroid-9-alpha-monooxygenase, oxygenase component (399 aa).

The region spanning 26–128 (WHCLGLVRDF…VAEVSGQLFV (103 aa)) is the Rieske domain. [2Fe-2S] cluster-binding residues include Cys67, His69, Cys86, and His89. Fe cation is bound by residues Asn175, His181, His186, and Asp307.

Homotrimer. The two-component system 3-ketosteroid-9-alpha-monooxygenase is composed of an oxygenase component KshA and a reductase component KshB. Requires [2Fe-2S] cluster as cofactor. Fe cation serves as cofactor.

In terms of biological role, could catalyze the introduction of a 9alpha-hydroxyl moiety into the ring B of 3-ketosteroid substrates. The polypeptide is Probable 3-ketosteroid-9-alpha-monooxygenase, oxygenase component (Rhodococcus rhodochrous).